The following is a 250-amino-acid chain: Diphthine synthase (250 aa).

S-adenosyl-L-methionine is bound by residues L9, D85, V88, 113–114 (SI), L165, A202, and H227.

It belongs to the diphthine synthase family. In terms of assembly, homodimer.

It catalyses the reaction 2-[(3S)-amino-3-carboxypropyl]-L-histidyl-[translation elongation factor 2] + 3 S-adenosyl-L-methionine = diphthine-[translation elongation factor 2] + 3 S-adenosyl-L-homocysteine + 3 H(+). It functions in the pathway protein modification; peptidyl-diphthamide biosynthesis. Functionally, S-adenosyl-L-methionine-dependent methyltransferase that catalyzes the trimethylation of the amino group of the modified target histidine residue in translation elongation factor 2 (EF-2), to form an intermediate called diphthine. The three successive methylation reactions represent the second step of diphthamide biosynthesis. The sequence is that of Diphthine synthase from Methanoregula boonei (strain DSM 21154 / JCM 14090 / 6A8).